A 553-amino-acid polypeptide reads, in one-letter code: Threonylcarbamoyladenosine tRNA methylthiotransferase (553 aa).

The segment at 21–61 (SAEDVKPQERYQNKKSVTVRAKKRVQIKPETDAEEKPTPRP) is disordered. Composition is skewed to basic and acidic residues over residues 23–32 (EDVKPQERYQ) and 47–58 (IKPETDAEEKPT). In terms of domain architecture, MTTase N-terminal spans 72–179 (QKVFVKTWGC…VVEVVEETLK (108 aa)). Residues Cys81, Cys116, Cys145, Cys221, Cys225, and Cys228 each contribute to the [4Fe-4S] cluster site. The 232-residue stretch at 207–438 (RKNPLIEIIS…DLFYSYEPYA (232 aa)) folds into the Radical SAM core domain. The TRAM domain occupies 438–500 (AQRVGEMYTV…KFSMVGEILD (63 aa)). The chain crosses the membrane as a helical span at residues 533-553 (VGIALVVGSLAFLLQLLIRFL).

This sequence belongs to the methylthiotransferase family. CDKAL1 subfamily. The cofactor is [4Fe-4S] cluster.

It is found in the membrane. It carries out the reaction N(6)-L-threonylcarbamoyladenosine(37) in tRNA + (sulfur carrier)-SH + AH2 + 2 S-adenosyl-L-methionine = 2-methylsulfanyl-N(6)-L-threonylcarbamoyladenosine(37) in tRNA + (sulfur carrier)-H + 5'-deoxyadenosine + L-methionine + A + S-adenosyl-L-homocysteine + 2 H(+). In terms of biological role, catalyzes the methylthiolation of N6-threonylcarbamoyladenosine (t(6)A), leading to the formation of 2-methylthio-N6-threonylcarbamoyladenosine (ms(2)t(6)A) at position 37 in tRNAs that read codons beginning with adenine. The polypeptide is Threonylcarbamoyladenosine tRNA methylthiotransferase (Drosophila pseudoobscura pseudoobscura (Fruit fly)).